The sequence spans 147 residues: Prefoldin subunit alpha (147 aa).

This sequence belongs to the prefoldin alpha subunit family. In terms of assembly, heterohexamer of two alpha and four beta subunits.

The protein resides in the cytoplasm. Its function is as follows. Molecular chaperone capable of stabilizing a range of proteins. Seems to fulfill an ATP-independent, HSP70-like function in archaeal de novo protein folding. This is Prefoldin subunit alpha from Thermococcus onnurineus (strain NA1).